Reading from the N-terminus, the 269-residue chain is Formamidopyrimidine-DNA glycosylase (269 aa).

P2 (schiff-base intermediate with DNA) is an active-site residue. E3 (proton donor) is an active-site residue. The Proton donor; for beta-elimination activity role is filled by K57. DNA contacts are provided by H90, R109, and K150. The FPG-type zinc finger occupies 235 to 269 (QVYGRKGEPCRVCGTPIVATKHAQRATFYCRQCQK). The Proton donor; for delta-elimination activity role is filled by R259.

It belongs to the FPG family. In terms of assembly, monomer. It depends on Zn(2+) as a cofactor.

It carries out the reaction Hydrolysis of DNA containing ring-opened 7-methylguanine residues, releasing 2,6-diamino-4-hydroxy-5-(N-methyl)formamidopyrimidine.. The enzyme catalyses 2'-deoxyribonucleotide-(2'-deoxyribose 5'-phosphate)-2'-deoxyribonucleotide-DNA = a 3'-end 2'-deoxyribonucleotide-(2,3-dehydro-2,3-deoxyribose 5'-phosphate)-DNA + a 5'-end 5'-phospho-2'-deoxyribonucleoside-DNA + H(+). Its function is as follows. Involved in base excision repair of DNA damaged by oxidation or by mutagenic agents. Acts as a DNA glycosylase that recognizes and removes damaged bases. Has a preference for oxidized purines, such as 7,8-dihydro-8-oxoguanine (8-oxoG). Has AP (apurinic/apyrimidinic) lyase activity and introduces nicks in the DNA strand. Cleaves the DNA backbone by beta-delta elimination to generate a single-strand break at the site of the removed base with both 3'- and 5'-phosphates. The chain is Formamidopyrimidine-DNA glycosylase from Escherichia coli O6:H1 (strain CFT073 / ATCC 700928 / UPEC).